Reading from the N-terminus, the 401-residue chain is E3 ubiquitin-protein ligase DA2 (401 aa).

The RING-type; degenerate zinc finger occupies 59 to 102 (CPICFLYYPSLNRSRCCMKSICTECFLQMKNPNSARPTQCPFCK). Positions 139–153 (KEMQDDEEKMQKRLE) are enriched in basic and acidic residues. A disordered region spans residues 139–164 (KEMQDDEEKMQKRLESCSSSTSAMTG).

Interacts with DA1 (via C-terminus).

It catalyses the reaction S-ubiquitinyl-[E2 ubiquitin-conjugating enzyme]-L-cysteine + [acceptor protein]-L-lysine = [E2 ubiquitin-conjugating enzyme]-L-cysteine + N(6)-ubiquitinyl-[acceptor protein]-L-lysine.. It functions in the pathway protein modification; protein ubiquitination. E3 ubiquitin-protein ligase involved in the regulation of organ and seed size. Acts synergistically with DA1 to regulate seed size. Functions synergistically with DA1 to restrict cell proliferation in the maternal integuments of ovules and developing seeds. Seems to function independently of BB. Possesses E3 ubiquitin-protein ligase activity in vitro. Polyubiquitinates DA1, DAR1 and DAR2, but not DAR3. This is E3 ubiquitin-protein ligase DA2 from Arabidopsis thaliana (Mouse-ear cress).